A 464-amino-acid polypeptide reads, in one-letter code: 3-isopropylmalate dehydratase large subunit (464 aa).

Positions 337, 397, and 400 each coordinate [4Fe-4S] cluster.

This sequence belongs to the aconitase/IPM isomerase family. LeuC type 1 subfamily. As to quaternary structure, heterodimer of LeuC and LeuD. It depends on [4Fe-4S] cluster as a cofactor.

It catalyses the reaction (2R,3S)-3-isopropylmalate = (2S)-2-isopropylmalate. The protein operates within amino-acid biosynthesis; L-leucine biosynthesis; L-leucine from 3-methyl-2-oxobutanoate: step 2/4. Its function is as follows. Catalyzes the isomerization between 2-isopropylmalate and 3-isopropylmalate, via the formation of 2-isopropylmaleate. This chain is 3-isopropylmalate dehydratase large subunit, found in Bacillus cereus (strain G9842).